Here is a 146-residue protein sequence, read N- to C-terminus: Small ribosomal subunit protein uS5 (146 aa).

The region spanning Phe8–Val71 is the S5 DRBM domain.

It belongs to the universal ribosomal protein uS5 family. As to quaternary structure, part of the 30S ribosomal subunit. Contacts proteins S4 and S8.

In terms of biological role, with S4 and S12 plays an important role in translational accuracy. Located at the back of the 30S subunit body where it stabilizes the conformation of the head with respect to the body. This chain is Small ribosomal subunit protein uS5, found in Wolinella succinogenes (strain ATCC 29543 / DSM 1740 / CCUG 13145 / JCM 31913 / LMG 7466 / NCTC 11488 / FDC 602W) (Vibrio succinogenes).